The sequence spans 299 residues: Phosphoribosylaminoimidazole-succinocarboxamide synthase (299 aa).

The interval 259-279 is disordered; the sequence is PESGWDRKSEQPPPPLPQHVV.

This sequence belongs to the SAICAR synthetase family.

It catalyses the reaction 5-amino-1-(5-phospho-D-ribosyl)imidazole-4-carboxylate + L-aspartate + ATP = (2S)-2-[5-amino-1-(5-phospho-beta-D-ribosyl)imidazole-4-carboxamido]succinate + ADP + phosphate + 2 H(+). It functions in the pathway purine metabolism; IMP biosynthesis via de novo pathway; 5-amino-1-(5-phospho-D-ribosyl)imidazole-4-carboxamide from 5-amino-1-(5-phospho-D-ribosyl)imidazole-4-carboxylate: step 1/2. This Streptomyces avermitilis (strain ATCC 31267 / DSM 46492 / JCM 5070 / NBRC 14893 / NCIMB 12804 / NRRL 8165 / MA-4680) protein is Phosphoribosylaminoimidazole-succinocarboxamide synthase.